The following is a 215-amino-acid chain: Intraflagellar transport protein 43 homolog B (215 aa).

A disordered region spans residues 1–107; the sequence is MDDHLKLGDS…SDGEGDIPVI (107 aa).

This sequence belongs to the IFT43 family. In terms of assembly, component of IFT complex A.

Component of IFT complex A (IFT-A) involved in retrograde ciliary transport along microtubules from the ciliary tip to the base. This Salmo salar (Atlantic salmon) protein is Intraflagellar transport protein 43 homolog B (ift43b).